We begin with the raw amino-acid sequence, 938 residues long: Isoleucine--tRNA ligase (938 aa).

The 'HIGH' region motif lies at P58 to T68. L-isoleucyl-5'-AMP is bound at residue E565. The short motif at K606 to S610 is the 'KMSKS' region element. K609 lines the ATP pocket. Zn(2+)-binding residues include C905, C908, C925, and C928.

It belongs to the class-I aminoacyl-tRNA synthetase family. IleS type 1 subfamily. Monomer. It depends on Zn(2+) as a cofactor.

It localises to the cytoplasm. The catalysed reaction is tRNA(Ile) + L-isoleucine + ATP = L-isoleucyl-tRNA(Ile) + AMP + diphosphate. In terms of biological role, catalyzes the attachment of isoleucine to tRNA(Ile). As IleRS can inadvertently accommodate and process structurally similar amino acids such as valine, to avoid such errors it has two additional distinct tRNA(Ile)-dependent editing activities. One activity is designated as 'pretransfer' editing and involves the hydrolysis of activated Val-AMP. The other activity is designated 'posttransfer' editing and involves deacylation of mischarged Val-tRNA(Ile). The protein is Isoleucine--tRNA ligase of Nitratidesulfovibrio vulgaris (strain DSM 19637 / Miyazaki F) (Desulfovibrio vulgaris).